We begin with the raw amino-acid sequence, 600 residues long: Fructan 1-exohydrolase (600 aa).

An N-terminal signal peptide occupies residues Met-1–Ala-27. Asp-73 is an active-site residue. Asn-166, Asn-234, and Asn-246 each carry an N-linked (GlcNAc...) asparagine glycan. Cys-444 and Cys-490 form a disulfide bridge. N-linked (GlcNAc...) asparagine glycosylation occurs at Asn-565.

Belongs to the glycosyl hydrolase 32 family.

The enzyme catalyses Hydrolysis of terminal, non-reducing (2-&gt;1)-linked beta-D-fructofuranose residues in fructans.. Inhibited by sucrose. Hydrolyzes inulin-type beta-(2,1)-fructans. May play a role as a beta-(2,1)-trimmer during graminan biosynthesis. The chain is Fructan 1-exohydrolase from Leymus chinensis (Chinese lyme grass).